A 332-amino-acid polypeptide reads, in one-letter code: 4-hydroxy-3-methylbut-2-enyl diphosphate reductase (332 aa).

A [4Fe-4S] cluster-binding site is contributed by Cys-34. Residues His-63 and His-96 each coordinate (2E)-4-hydroxy-3-methylbut-2-enyl diphosphate. Residues His-63 and His-96 each contribute to the dimethylallyl diphosphate site. 2 residues coordinate isopentenyl diphosphate: His-63 and His-96. Cys-118 lines the [4Fe-4S] cluster pocket. His-146 is a (2E)-4-hydroxy-3-methylbut-2-enyl diphosphate binding site. Position 146 (His-146) interacts with dimethylallyl diphosphate. Residue His-146 participates in isopentenyl diphosphate binding. Glu-148 functions as the Proton donor in the catalytic mechanism. Position 186 (Thr-186) interacts with (2E)-4-hydroxy-3-methylbut-2-enyl diphosphate. A [4Fe-4S] cluster-binding site is contributed by Cys-216. The (2E)-4-hydroxy-3-methylbut-2-enyl diphosphate site is built by Ser-244, Ser-245, Asn-246, and Ser-289. Residues Ser-244, Ser-245, Asn-246, and Ser-289 each coordinate dimethylallyl diphosphate. Residues Ser-244, Ser-245, Asn-246, and Ser-289 each coordinate isopentenyl diphosphate.

It belongs to the IspH family. Requires [4Fe-4S] cluster as cofactor.

The catalysed reaction is isopentenyl diphosphate + 2 oxidized [2Fe-2S]-[ferredoxin] + H2O = (2E)-4-hydroxy-3-methylbut-2-enyl diphosphate + 2 reduced [2Fe-2S]-[ferredoxin] + 2 H(+). The enzyme catalyses dimethylallyl diphosphate + 2 oxidized [2Fe-2S]-[ferredoxin] + H2O = (2E)-4-hydroxy-3-methylbut-2-enyl diphosphate + 2 reduced [2Fe-2S]-[ferredoxin] + 2 H(+). Its pathway is isoprenoid biosynthesis; dimethylallyl diphosphate biosynthesis; dimethylallyl diphosphate from (2E)-4-hydroxy-3-methylbutenyl diphosphate: step 1/1. It functions in the pathway isoprenoid biosynthesis; isopentenyl diphosphate biosynthesis via DXP pathway; isopentenyl diphosphate from 1-deoxy-D-xylulose 5-phosphate: step 6/6. Functionally, catalyzes the conversion of 1-hydroxy-2-methyl-2-(E)-butenyl 4-diphosphate (HMBPP) into a mixture of isopentenyl diphosphate (IPP) and dimethylallyl diphosphate (DMAPP). Acts in the terminal step of the DOXP/MEP pathway for isoprenoid precursor biosynthesis. This chain is 4-hydroxy-3-methylbut-2-enyl diphosphate reductase, found in Mycolicibacterium paratuberculosis (strain ATCC BAA-968 / K-10) (Mycobacterium paratuberculosis).